The following is a 668-amino-acid chain: Potassium voltage-gated channel subfamily KQT member 1 (668 aa).

Topologically, residues 1–119 (MDTASSPPSA…YNFLERPTGW (119 aa)) are cytoplasmic. The residue at position 27 (serine 27) is a Phosphoserine; by PKA. Residues 120-141 (KCFVYHFTVFLIVLVCLIFSVL) traverse the membrane as a helical segment. At 142–152 (STIEQYAALAT) the chain is on the extracellular side. Residues 153–175 (GTLFWMEIVLVVFFGTEYVVRLW) form a helical membrane-spanning segment. At 176–191 (SAGCRSKYVGIWGRLR) the chain is on the cytoplasmic side. The helical transmembrane segment at 192–217 (FARKPISIIDLIVVVASMVVLCVGSK) threads the bilayer. Topologically, residues 218-225 (GQVFATSA) are extracellular. Residues 226–241 (IRGIRFLQILRMLHVD) form a helical; Voltage-sensor membrane-spanning segment. Residues 237–245 (MLHVDRQGG) form an interaction with KCNE3 region. Residues 242–259 (RQGGTWRLLGSVVFIHRQ) lie on the Cytoplasmic side of the membrane. Glutamine 243 is an a 1,2-diacyl-sn-glycero-3-phospho-(1D-myo-inositol-4,5-bisphosphate) binding site. Residues 260-282 (ELITTLYIGFLGLIFSSYFVYLA) form a helical membrane-spanning segment. Topologically, residues 283 to 298 (EKDAVNESGRIEFGSY) are extracellular. The N-linked (GlcNAc...) asparagine glycan is linked to asparagine 288. The pore-forming intramembrane region spans 299–319 (ADALWWGVVTVTTIGYGDKVP). Residues 320 to 321 (QT) lie on the Extracellular side of the membrane. Residues 322-347 (WVGKTIASCFSVFAISFFALPAGILG) traverse the membrane as a helical segment. At 348 to 668 (SGFALKVQQK…VPQTGPDEGS (321 aa)) the chain is on the cytoplasmic side. The interval 369 to 381 (AAASLIQTAWRCY) is interaction with CALM. Serine 406 and serine 408 each carry phosphoserine. Residues 514 to 528 (KVIRRMQYFVAKKKF) are interaction with CALM; calcium-dependent. An interaction with KCNE1 C-terminus region spans residues 534–571 (PYDVRDVIEQYSQGHLNLMVRIKELQRRLDQSIGKPSL). A coiled-coil region spans residues 584–620 (SNTIGARLNRVEDKVTQLDQRLVIITDMLHQLLSMQQ). The interval 587–615 (IGARLNRVEDKVTQLDQRLVIITDMLHQL) is interaction with AKAP9. Residues 588–619 (GARLNRVEDKVTQLDQRLVIITDMLHQLLSMQ) form a C-terminal assembly domain (tetramerization) region.

This sequence belongs to the potassium channel family. KQT (TC 1.A.1.15) subfamily. Kv7.1/KCNQ1 sub-subfamily. As to quaternary structure, tetramer. Heterotetramer with KCNE1; form the native cardiac channel I(Ks) which increases the amplitude and slows down the activation kinetics of outward potassium current and targets to the membrane raft. Interacts (via C-terminus) with CALM; forms a heterooctameric structure (with 4:4 KCNQ1:CALM stoichiometry) in a calcium-independent manner. Interacts with AKAP9; targets protein kinase A (PKA) catalytic and regulatory subunits and protein phosphatase 1 (PP1) to the KCNQ1-KCNE1 complex, allowing PKA-mediated phosphorylation and increase of delayed rectifier potassium channel activity. Interacts with KCNE2; form an heterooligomer complex that targets to the membrane raft and leading to currents with an apparently instantaneous activation, a rapid deactivation process and a linear current-voltage relationship and decreases the amplitude of the outward current. Interacts with AP2M1; mediates estrogen-induced internalization via clathrin-coated vesicles. Interacts with NEDD4L; promotes internalization and decreases I(Ks) currents. Interacts with USP2; counteracts the NEDD4L-specific down-regulation of I(Ks) and restore plasma membrane localization. Heterotetramer with KCNQ5; has a voltage-gated potassium channel activity. Interacts with KCNE3; four KCNE3 molecules are bound to one KCNQ1 tetramer (4:4 KCNQ1:KCNE3 stoichiometry); alters membrane raft localization; affects KCNQ1 structure and gating properties. Interacts with KCNE4; impairs KCNQ1 localization in lipid rafts and inhibits voltage-gated potassium channel activity. Interacts with KCNE5; impairs KCNQ1 localization in lipid rafts and only conducts current upon strong and continued depolarization. Interacts with SLC5A3; forms coregulatory channel-transporter complexes that modulate Na(+)-coupled myo-inositol influx through the transporter. Post-translationally, phosphorylation at Ser-27 by PKA; increases delayed rectifier potassium channel activity of the KCNQ1-KCNE1 complex through a macromolecular complex that includes PKA, PP1, and the targeting protein AKAP9. Ubiquitinated by NEDD4L; promotes internalization. The ubiquitinylated form is internalized through a clathrin-mediated endocytosis by interacting with AP2M1 and is recycled back to the cell membrane via RAB4A and RAB11A. In terms of processing, deubiquitinated by USP2; counteracts the NEDD4L-specific down-regulation of I(Ks) and restores the membrane localization. As to expression, expressed in heart, kidney and salivary glands. Detected in the cochlea. Almost undetectable in brain, skeletal muscle and liver. Widely expressed in embryonic and neonatal tissues. Expressed in choroid plexus epithelium (at protein level).

The protein localises to the cell membrane. Its subcellular location is the cytoplasmic vesicle membrane. It localises to the early endosome. It is found in the membrane raft. The protein resides in the endoplasmic reticulum. The protein localises to the basolateral cell membrane. Its subcellular location is the apical cell membrane. The catalysed reaction is K(+)(in) = K(+)(out). With respect to regulation, PIP2 molecule is essential to activate KCNQ channels by inducing the coupling of the voltage-sensing domain (VSD) and the pore-forming domain (PD). Upon channel activation, PIP2 disrupts the VSD-calmodulin/CALM interactions, causing the release of CALM from the VSD which triggers the opening of the gate. Calcium potentiates KCNQ1 channel current through calcium-bound CALM. Calcium-bound CALM competes with PIP2 to stabilize the channel open state. Pore-forming subunit of the voltage-gated potassium (Kv) channel involved in the regulation of cardiomyocyte excitability and important in normal development and functions of myocardium, inner ear, stomach and colon. Associates with KCNE beta subunits that modulates current kinetics. Induces a voltage-dependent by rapidly activating and slowly deactivating potassium-selective outward current. Also promotes a delayed voltage activated potassium current showing outward rectification characteristic. During beta-adrenergic receptor stimulation participates in cardiac increases the amplitude and slows down the activation kinetics of outward potassium current I(Ks). Muscarinic agonist oxotremorine-M strongly suppresses KCNQ1/KCNE1 current. When associated with KCNE3, forms the potassium channel that is important for cyclic AMP-stimulated intestinal secretion of chloride ions. This interaction with KCNE3 is reduced by 17beta-estradiol, resulting in the reduction of currents. During conditions of increased substrate load, maintains the driving force for proximal tubular and intestinal sodium ions absorption, gastric acid secretion, and cAMP-induced jejunal chloride ions secretion. Allows the provision of potassium ions to the luminal membrane of the secretory canaliculus in the resting state as well as during stimulated acid secretion. When associated with KCNE2, forms a heterooligomer complex leading to currents with an apparently instantaneous activation, a rapid deactivation process and a linear current-voltage relationship and decreases the amplitude of the outward current. When associated with KCNE4, inhibits voltage-gated potassium channel activity. When associated with KCNE5, this complex only conducts current upon strong and continued depolarization. Also forms a heterotetramer with KCNQ5; has a voltage-gated potassium channel activity. Binds with phosphatidylinositol 4,5-bisphosphate. KCNQ1-KCNE2 channel associates with Na(+)-coupled myo-inositol symporter in the apical membrane of choroid plexus epithelium and regulates the myo-inositol gradient between blood and cerebrospinal fluid with an impact on neuron excitability. The chain is Potassium voltage-gated channel subfamily KQT member 1 from Mus musculus (Mouse).